Here is a 207-residue protein sequence, read N- to C-terminus: MATTLEVQKRETTQHSEVTRLRSEGKVPGIIYGYKSENVPVSVDSLELIKAVRDNGRNAVFSVTVDGKKLNVLLHEYQVDPLKDVLVHVDLLAVDMNEEVETDVRVVLVGDAPGVKAGGVLQQIIHDVKVSATPEKLPETIELDISSLEIGDVLTTNDLPENKDYVVQAEEEETVVTVSAPRAEEEPTTTEAPEPEAVHGNDEEPVE.

Residues 171–207 (EEETVVTVSAPRAEEEPTTTEAPEPEAVHGNDEEPVE) form a disordered region. A compositionally biased stretch (basic and acidic residues) spans 196–207 (EAVHGNDEEPVE).

The protein belongs to the bacterial ribosomal protein bL25 family. CTC subfamily. In terms of assembly, part of the 50S ribosomal subunit; part of the 5S rRNA/L5/L18/L25 subcomplex. Contacts the 5S rRNA. Binds to the 5S rRNA independently of L5 and L18.

Functionally, this is one of the proteins that binds to the 5S RNA in the ribosome where it forms part of the central protuberance. The protein is Large ribosomal subunit protein bL25 of Listeria innocua serovar 6a (strain ATCC BAA-680 / CLIP 11262).